A 292-amino-acid chain; its full sequence is METFVLAHNYQRPDVQLMADSVGDSLELALEAREIDADRIVMCGVDFMAEVVKALNPDREVVVPDHRAACGMAMRLRAKELREFRREHPDAAVVVYVNTSAEVKAEADVMCTSANAVEVVSSLPEDKIIFVPDGNLAAWVQKHVPDKEVIPFPEHGCCPVHHSLSPSDLRELCSQHPDAAVVVHPECPLEVCAMADFVGSTSQIRQYCEKEDASKIVMGTEEGLAFRIRRETGTEVIVPGHMVCPDMKINTGEKVERVLEARHVPEPLRVELDPDLISQVEEVVEEMFRLTR.

Residues His-8 and Ser-25 each contribute to the iminosuccinate site. Cys-70 is a [4Fe-4S] cluster binding site. Iminosuccinate contacts are provided by residues 96 to 98 (YVN) and Ser-113. Residue Cys-158 coordinates [4Fe-4S] cluster. Iminosuccinate contacts are provided by residues 184–186 (HPE) and Thr-201. Cys-244 contacts [4Fe-4S] cluster.

It belongs to the quinolinate synthase family. Type 2 subfamily. Requires [4Fe-4S] cluster as cofactor.

It localises to the cytoplasm. The catalysed reaction is iminosuccinate + dihydroxyacetone phosphate = quinolinate + phosphate + 2 H2O + H(+). It participates in cofactor biosynthesis; NAD(+) biosynthesis; quinolinate from iminoaspartate: step 1/1. Catalyzes the condensation of iminoaspartate with dihydroxyacetone phosphate to form quinolinate. In Methanopyrus kandleri (strain AV19 / DSM 6324 / JCM 9639 / NBRC 100938), this protein is Quinolinate synthase (nadA).